The chain runs to 1377 residues: DNA-directed RNA polymerase subunit beta (1377 aa).

It belongs to the RNA polymerase beta chain family. The RNAP catalytic core consists of 2 alpha, 1 beta, 1 beta' and 1 omega subunit. When a sigma factor is associated with the core the holoenzyme is formed, which can initiate transcription.

The catalysed reaction is RNA(n) + a ribonucleoside 5'-triphosphate = RNA(n+1) + diphosphate. Functionally, DNA-dependent RNA polymerase catalyzes the transcription of DNA into RNA using the four ribonucleoside triphosphates as substrates. This chain is DNA-directed RNA polymerase subunit beta, found in Campylobacter lari (strain RM2100 / D67 / ATCC BAA-1060).